Consider the following 193-residue polypeptide: MSTMLIAVILLTLLALFFGVLLGFAALKFKVEGNPIVDELEAILPQTQCGQCGYPGCRPYAEAIANGDKVNKCPPGGTATMEKLASLMGVEPEPLNAEAQSQVKKVAYIREDECIGCTKCIQACPVDAIIGAGKLMHTVLTADCTGCDLCVEPCPVDCIDMIPVGQNLKNWNWRLNAIPVTLIQETPHEEKRG.

Residues 1-26 (MSTMLIAVILLTLLALFFGVLLGFAA) are hydrophobic. The 4Fe-4S domain maps to 32 to 90 (EGNPIVDELEAILPQTQCGQCGYPGCRPYAEAIANGDKVNKCPPGGTATMEKLASLMGV). Positions 49, 52, 57, 73, 114, 117, 120, 124, 144, 147, 150, and 154 each coordinate [4Fe-4S] cluster. 4Fe-4S ferredoxin-type domains follow at residues 105 to 134 (KVAYIREDECIGCTKCIQACPVDAIIGAGK) and 136 to 164 (MHTVLTADCTGCDLCVEPCPVDCIDMIPV).

This sequence belongs to the 4Fe4S bacterial-type ferredoxin family. RnfB subfamily. In terms of assembly, the complex is composed of six subunits: RnfA, RnfB, RnfC, RnfD, RnfE and RnfG. The cofactor is [4Fe-4S] cluster.

The protein localises to the cell inner membrane. Its function is as follows. Part of a membrane-bound complex that couples electron transfer with translocation of ions across the membrane. In Shewanella sp. (strain MR-7), this protein is Ion-translocating oxidoreductase complex subunit B.